A 367-amino-acid chain; its full sequence is 3-dehydroquinate synthase (367 aa).

NAD(+) contacts are provided by residues 72–77 (DGENYK), 106–110 (GVIGD), 130–131 (TT), Lys143, Lys152, and 170–173 (FLST). Positions 185, 248, and 265 each coordinate Zn(2+).

The protein belongs to the sugar phosphate cyclases superfamily. Dehydroquinate synthase family. It depends on Co(2+) as a cofactor. Requires Zn(2+) as cofactor. NAD(+) serves as cofactor.

The protein resides in the cytoplasm. The enzyme catalyses 7-phospho-2-dehydro-3-deoxy-D-arabino-heptonate = 3-dehydroquinate + phosphate. It functions in the pathway metabolic intermediate biosynthesis; chorismate biosynthesis; chorismate from D-erythrose 4-phosphate and phosphoenolpyruvate: step 2/7. Its function is as follows. Catalyzes the conversion of 3-deoxy-D-arabino-heptulosonate 7-phosphate (DAHP) to dehydroquinate (DHQ). This Buchnera aphidicola subsp. Cinara cedri (strain Cc) protein is 3-dehydroquinate synthase.